The primary structure comprises 295 residues: Keratin-like protein KRT222 (295 aa).

Residues 1–150 (MELSQLLNEI…HLLEKEEIRY (150 aa)) form the IF rod domain. The stretch at 2-150 (ELSQLLNEIR…HLLEKEEIRY (149 aa)) forms a coiled coil.

Belongs to the intermediate filament family.

This is Keratin-like protein KRT222 (KRT222) from Homo sapiens (Human).